The following is a 259-amino-acid chain: Deoxyribose-phosphate aldolase (259 aa).

Asp102 serves as the catalytic Proton donor/acceptor. The Schiff-base intermediate with acetaldehyde role is filled by Lys167. Residue Lys201 is the Proton donor/acceptor of the active site.

The protein belongs to the DeoC/FbaB aldolase family. DeoC type 2 subfamily.

The protein localises to the cytoplasm. The catalysed reaction is 2-deoxy-D-ribose 5-phosphate = D-glyceraldehyde 3-phosphate + acetaldehyde. It functions in the pathway carbohydrate degradation; 2-deoxy-D-ribose 1-phosphate degradation; D-glyceraldehyde 3-phosphate and acetaldehyde from 2-deoxy-alpha-D-ribose 1-phosphate: step 2/2. Functionally, catalyzes a reversible aldol reaction between acetaldehyde and D-glyceraldehyde 3-phosphate to generate 2-deoxy-D-ribose 5-phosphate. This Photorhabdus laumondii subsp. laumondii (strain DSM 15139 / CIP 105565 / TT01) (Photorhabdus luminescens subsp. laumondii) protein is Deoxyribose-phosphate aldolase.